We begin with the raw amino-acid sequence, 375 residues long: Alpha-2,8-sialyltransferase 8B (375 aa).

The Cytoplasmic segment spans residues 1-6 (MQLQFR). The helical; Signal-anchor for type II membrane protein transmembrane segment at 7 to 23 (SWMLAALTLLVVFLIFA) threads the bilayer. Topologically, residues 24 to 375 (DISEIEEEIG…LTVGQCDGAT (352 aa)) are lumenal. N-linked (GlcNAc...) asparagine glycans are attached at residues asparagine 60, asparagine 72, asparagine 89, and asparagine 134. 2 disulfides stabilise this stretch: cysteine 157-cysteine 307 and cysteine 171-cysteine 371. The CMP-N-acetyl-beta-neuraminate site is built by asparagine 162 and asparagine 185. N-linked (GlcNAc...) asparagine glycosylation is found at asparagine 219 and asparagine 234. CMP-N-acetyl-beta-neuraminate is bound by residues threonine 294, threonine 295, glycine 296, tryptophan 316, tyrosine 329, and histidine 330. Residue histidine 346 is the Proton donor/acceptor of the active site.

This sequence belongs to the glycosyltransferase 29 family. Autopolysialylated. Autopolysialylation is not a prerequisite for the polysialylation acitity, but enhances the polysialylation acitity. In terms of tissue distribution, highly expressed in fetal brain, kidney and heart and to a much lesser extent in adult heart and thymus.

It localises to the golgi apparatus membrane. The protein localises to the secreted. The protein resides in the cell membrane. The enzyme catalyses [N-acetyl-alpha-D-neuraminosyl-(2-&gt;8)](n) + CMP-N-acetyl-beta-neuraminate = [N-acetyl-alpha-D-neuraminosyl-(2-&gt;8)](n+1) + CMP + H(+). It functions in the pathway protein modification; protein glycosylation. In terms of biological role, catalyzes the transfer of a sialic acid from a CMP-linked sialic acid donor onto a terminal alpha-2,3-, alpha-2,6-, or alpha-2,8-linked sialic acid of an N-linked glycan acceptor through alpha-2,8-linkages. Therefore, participates in polysialic acid synthesis on various sialylated N-acetyllactosaminyl oligosaccharides (alpha-2,3-, alpha-2,6-, or alpha-2,8-linked sialic acid), including NCAM1, NCAM1 N-glycans, FETUB N-glycans, and to a lesser extent sialylparagloboside (SPG) and AHSG, which does not require the initial addition of an alpha 2,8-sialic acid. However, does not exhibit sialic acid-polymerase activity. Catalyzes polysialic acid synthesis in the hippocampal on NCAM1 and supports neurite outgrowth. ST8SIA2-mediated polysialylation influences on oligodendrocyte differentiation and may promote the integrity of myelin and axons. The sequence is that of Alpha-2,8-sialyltransferase 8B from Homo sapiens (Human).